Reading from the N-terminus, the 294-residue chain is Elongation factor Ts (294 aa).

The segment at 82–85 (TDFV) is involved in Mg(2+) ion dislocation from EF-Tu.

Belongs to the EF-Ts family.

The protein localises to the cytoplasm. Its function is as follows. Associates with the EF-Tu.GDP complex and induces the exchange of GDP to GTP. It remains bound to the aminoacyl-tRNA.EF-Tu.GTP complex up to the GTP hydrolysis stage on the ribosome. In Psychrobacter cryohalolentis (strain ATCC BAA-1226 / DSM 17306 / VKM B-2378 / K5), this protein is Elongation factor Ts.